Reading from the N-terminus, the 260-residue chain is Thiazole synthase (260 aa).

Lysine 96 acts as the Schiff-base intermediate with DXP in catalysis. Residues glycine 157, 184–185 (AG), and 206–207 (NT) each bind 1-deoxy-D-xylulose 5-phosphate.

This sequence belongs to the ThiG family. Homotetramer. Forms heterodimers with either ThiH or ThiS.

The protein resides in the cytoplasm. It carries out the reaction [ThiS sulfur-carrier protein]-C-terminal-Gly-aminoethanethioate + 2-iminoacetate + 1-deoxy-D-xylulose 5-phosphate = [ThiS sulfur-carrier protein]-C-terminal Gly-Gly + 2-[(2R,5Z)-2-carboxy-4-methylthiazol-5(2H)-ylidene]ethyl phosphate + 2 H2O + H(+). Its pathway is cofactor biosynthesis; thiamine diphosphate biosynthesis. Catalyzes the rearrangement of 1-deoxy-D-xylulose 5-phosphate (DXP) to produce the thiazole phosphate moiety of thiamine. Sulfur is provided by the thiocarboxylate moiety of the carrier protein ThiS. In vitro, sulfur can be provided by H(2)S. The chain is Thiazole synthase from Rhodopseudomonas palustris (strain BisB18).